Consider the following 339-residue polypeptide: MRIIGIETSCDETGIAIYDDEKGLLSHKLYSQVKLHADYGGVVPELASRDHVKKTIPLIKAAMAEANVTPQDLDGVAFTAGPGLVGALLVGATIGRSLAYAWDVPAVPVHHMEGHLLAPMLEENPPPFPFVALLVSGGHTMLVEVKNIGEYRILGESIDDAAGEAFDKTAKLMGLDYPGGPLLAKLAEKGTPGRFKFPRPMTDRPGLDMSFSGLKTFTANTIAANGDDEQTRADIAYAFQEAVCDTLVIKCKRALEETGLKRVVIAGGVSANKQLRADLEKLAKKIGGEVYYPRTEFCTDNGAMIAYAGMQRLKNGDVCELGLQARPRWPIDQLTSIQK.

Positions 111 and 115 each coordinate Fe cation. Substrate contacts are provided by residues 134–138 (LVSGG), Asp-167, Gly-180, and Asn-272. Asp-300 lines the Fe cation pocket.

Belongs to the KAE1 / TsaD family. Fe(2+) is required as a cofactor.

The protein resides in the cytoplasm. It carries out the reaction L-threonylcarbamoyladenylate + adenosine(37) in tRNA = N(6)-L-threonylcarbamoyladenosine(37) in tRNA + AMP + H(+). Functionally, required for the formation of a threonylcarbamoyl group on adenosine at position 37 (t(6)A37) in tRNAs that read codons beginning with adenine. Is involved in the transfer of the threonylcarbamoyl moiety of threonylcarbamoyl-AMP (TC-AMP) to the N6 group of A37, together with TsaE and TsaB. TsaD likely plays a direct catalytic role in this reaction. This Vibrio cholerae serotype O1 (strain ATCC 39541 / Classical Ogawa 395 / O395) protein is tRNA N6-adenosine threonylcarbamoyltransferase.